Reading from the N-terminus, the 195-residue chain is Imidazoleglycerol-phosphate dehydratase (195 aa).

It belongs to the imidazoleglycerol-phosphate dehydratase family.

The protein localises to the cytoplasm. The catalysed reaction is D-erythro-1-(imidazol-4-yl)glycerol 3-phosphate = 3-(imidazol-4-yl)-2-oxopropyl phosphate + H2O. It functions in the pathway amino-acid biosynthesis; L-histidine biosynthesis; L-histidine from 5-phospho-alpha-D-ribose 1-diphosphate: step 6/9. This chain is Imidazoleglycerol-phosphate dehydratase, found in Burkholderia pseudomallei (strain 1710b).